The sequence spans 532 residues: Telomerase Cajal body protein 1 (532 aa).

A disordered region spans residues 1–48 (MKTSEELRLAPDSLPSDLVPAPVLQASPADKNTDSEPVPPPCGGDDQL). Phosphoserine is present on residues S27, S61, and S83. Positions 83-115 (SPRIEEQEVPENASLPVEETNRPELESGEAMEG) are disordered. WD repeat units follow at residues 151–190 (RSEN…YSES), 206–251 (EGDT…LRAS), 256–297 (NHLD…RDCE), 307–348 (GQSG…ALLG), 349–389 (GHQG…HLLW), and 395–434 (VTTN…SDCK). T474 is subject to Phosphothreonine. S476 carries the phosphoserine modification. The segment at 505-532 (CGGGPDPSNPDEDQDEKGQGRTEAVGMS) is disordered.

It belongs to the TCAB1 family. In terms of assembly, component of the telomerase holoenzyme complex composed of one molecule of TERT, one molecule of WRAP53/TCAB1, two molecules of H/ACA ribonucleoprotein complex subunits DKC1, NOP10, NHP2 and GAR1, and a telomerase RNA template component (TERC). The telomerase holoenzyme complex is associated with TEP1, SMG6/EST1A and POT1. Interacts with the chaperonin-containing T-complex (TRiC) complex; which mediates the folding of WRAP53/TCAB1. Interacts with COIL. Interacts with SMN1. Interacts with RNF8. Interacts with histone H2AX. Post-translationally, phosphorylated at Ser-61 by ATM in response to DNA damage, promoting its interaction with histone H2AX and localization to sites of DNA double-strand breaks.

Its subcellular location is the nucleus. The protein localises to the cajal body. It localises to the chromosome. The protein resides in the telomere. RNA chaperone that plays a key role in telomere maintenance and RNA localization to Cajal bodies. Specifically recognizes and binds the Cajal body box (CAB box) present in both small Cajal body RNAs (scaRNAs) and telomerase RNA template component (TERC). Essential component of the telomerase holoenzyme complex, a ribonucleoprotein complex essential for the replication of chromosome termini that elongates telomeres in most eukaryotes. In the telomerase holoenzyme complex, required to stimulate the catalytic activity of the complex. Acts by specifically binding the CAB box of the TERC RNA and controlling the folding of the CR4/CR5 region of the TERC RNA, a critical step for telomerase activity. In addition, also controls telomerase holoenzyme complex localization to Cajal body. During S phase, required for delivery of TERC to telomeres during S phase and for telomerase activity. In addition to its role in telomere maintenance, also required for Cajal body formation, probably by mediating localization of scaRNAs to Cajal bodies. Also plays a role in DNA repair: phosphorylated by ATM in response to DNA damage and relocalizes to sites of DNA double-strand breaks to promote the repair of DNA double-strand breaks. Acts by recruiting the ubiquitin ligase RNF8 to DNA breaks and promote both homologous recombination (HR) and non-homologous end joining (NHEJ). This Rattus norvegicus (Rat) protein is Telomerase Cajal body protein 1.